A 222-amino-acid chain; its full sequence is Pyridoxal phosphate homeostasis protein (222 aa).

An N6-(pyridoxal phosphate)lysine modification is found at lysine 35.

The protein belongs to the pyridoxal phosphate-binding protein YggS/PROSC family.

Its function is as follows. Pyridoxal 5'-phosphate (PLP)-binding protein, which is involved in PLP homeostasis. This is Pyridoxal phosphate homeostasis protein from Helicobacter pylori (strain ATCC 700392 / 26695) (Campylobacter pylori).